Reading from the N-terminus, the 211-residue chain is Phosphoglycerate mutase (211 aa).

Substrate-binding positions include 14–21 (RHGESEWN) and 27–28 (TG). The active-site Tele-phosphohistidine intermediate is the His15. Thr37 carries the post-translational modification Phosphothreonine. Phosphoserine is present on Ser62. Residues Arg66, 93–96 (ERYY), Lys104, 120–121 (RR), and 164–165 (GN) each bind substrate. Residue Glu93 is the Proton donor/acceptor of the active site. Residue Tyr96 is modified to Phosphotyrosine. Phosphoserine is present on Ser166.

The protein belongs to the phosphoglycerate mutase family. BPG-dependent PGAM subfamily. Monomer. Post-translationally, the N-terminus is blocked.

The catalysed reaction is (2R)-2-phosphoglycerate = (2R)-3-phosphoglycerate. It participates in carbohydrate degradation; glycolysis; pyruvate from D-glyceraldehyde 3-phosphate: step 3/5. In Schizosaccharomyces pombe (strain 972 / ATCC 24843) (Fission yeast), this protein is Phosphoglycerate mutase (gpm1).